The chain runs to 214 residues: Holliday junction branch migration complex subunit RuvA (214 aa).

The interval 1–68 is domain I; it reads MIGFLQGKVL…QPKPVLIGFD (68 aa). Residues 69–146 form a domain II region; sequence SAEEKDFFQL…RFLLAADEAG (78 aa). Residues 147–160 are flexible linker; it reads AGDGVSKTGTPSLP. Residues 161–214 form a domain III region; it reads IQKAIDQVVDVLVQQLGHTPSAAKMMVAQALDRDPEIMTPEALFDEVYKGDVDA.

The protein belongs to the RuvA family. In terms of assembly, homotetramer. Forms an RuvA(8)-RuvB(12)-Holliday junction (HJ) complex. HJ DNA is sandwiched between 2 RuvA tetramers; dsDNA enters through RuvA and exits via RuvB. An RuvB hexamer assembles on each DNA strand where it exits the tetramer. Each RuvB hexamer is contacted by two RuvA subunits (via domain III) on 2 adjacent RuvB subunits; this complex drives branch migration. In the full resolvosome a probable DNA-RuvA(4)-RuvB(12)-RuvC(2) complex forms which resolves the HJ.

The protein resides in the cytoplasm. Its function is as follows. The RuvA-RuvB-RuvC complex processes Holliday junction (HJ) DNA during genetic recombination and DNA repair, while the RuvA-RuvB complex plays an important role in the rescue of blocked DNA replication forks via replication fork reversal (RFR). RuvA specifically binds to HJ cruciform DNA, conferring on it an open structure. The RuvB hexamer acts as an ATP-dependent pump, pulling dsDNA into and through the RuvAB complex. HJ branch migration allows RuvC to scan DNA until it finds its consensus sequence, where it cleaves and resolves the cruciform DNA. The polypeptide is Holliday junction branch migration complex subunit RuvA (Desulforapulum autotrophicum (strain ATCC 43914 / DSM 3382 / VKM B-1955 / HRM2) (Desulfobacterium autotrophicum)).